The sequence spans 522 residues: Transmembrane protein 213R (522 aa).

Transmembrane regions (helical) follow at residues 33 to 50 (NTIT…LLFG) and 55 to 72 (SLYI…IYSQ).

The protein belongs to the IIV-6 213R family.

It is found in the membrane. This is Transmembrane protein 213R from Invertebrate iridescent virus 6 (IIV-6).